A 463-amino-acid chain; its full sequence is MVICKRCKLLDATLVSRKEPFCDECFVKFISLKQRKQMMSDDYFQDIFKISYPDKKRGQAEADKQNQDSNVLVPLSLGSSSLAVLDILNDTLLEQKQTHRGKTGFHVEVITICGQAEFEEVRGKIELLKSKYKENSDKILFHIVDRNQFFAVPFDLQEITLYIDNFNTLVRSSNNPSTTVEKVLASAPNKTAKEDLLNIIYTHLIKKFALQRNFKAILWGHSMTKLADEVISLTVKGRGAEIAGYLDDSSLDSKYNTAFRNFHPGRDVLLSEIDAYCHIKGLSQFSHNYVVQDTLFYDKFVDKPTKNVKLIKNMTMNELARQYFDNIEGDYSNVISTVVRTGAKLSNPDNELNQIMHCSICNAIIYKNPVNWLDGITVSKPFVIHNEEELTNYNAWEAANPDKAEKLNKMSDTPAKNVGVCYGCITTLTGMKDRKLEWIRRDDKAELTAVLQEYEIPSDDSEQ.

This sequence belongs to the CTU2/NCS2 family.

It is found in the cytoplasm. It functions in the pathway tRNA modification; 5-methoxycarbonylmethyl-2-thiouridine-tRNA biosynthesis. In terms of biological role, plays a central role in 2-thiolation of mcm(5)S(2)U at tRNA wobble positions of tRNA(Lys), tRNA(Glu) and tRNA(Gln). May act by forming a heterodimer with NCS6 that ligates sulfur from thiocarboxylated URM1 onto the uridine of tRNAs at wobble position. Prior mcm(5) tRNA modification by the elongator complex is required for 2-thiolation. May also be involved in protein urmylation. This is Cytoplasmic tRNA 2-thiolation protein 2 from Kluyveromyces lactis (strain ATCC 8585 / CBS 2359 / DSM 70799 / NBRC 1267 / NRRL Y-1140 / WM37) (Yeast).